The sequence spans 720 residues: MNLLKHIFLEDDYDAYEGTLDPASFFRINKQEEIIASTVCEIGWEYSKSFGNAYICTSFLCFHSDDFKTRFTFPLAAVRKLERENSDNDTFTFDLSNFHSQIIHLRFKGTRQQSEFFCDRLVRQLHASLEDASSVGLFLLSLASERVCFSESANSQEIESIDLGLGSQFGYPIASSNTNGLINENNSKSWIQYLKKNGANFNLIQTPNFQKLVQSGIPNNLRADIWETCSGSLFPRWKSKGFYAKNIDSVINNRCEYSEEIEKDLTRSLPDYPAYQSPTGINTLRRILLFYSETNKEVGYCQAMNIVLAALLVYCTEEQAYFLFSQLCEFYIPGYYAKIIHGLLLDLTVFEYVLEHTLPHLYQKIIELDMDLKLITINWFFSLFIKDFRLDYAFRILDCLFVNGPRVLFQVALALFKVNAQGILNATDDSSVMKVFRQCFDHINQGTAADEKMAALGSRSSMCTLPQLFAVAFEYFDFITDSFVSAKRKEFKSSVLYSLRCFTKRSHLRSVYQTTLLSNTDLDLVYDAFINAIGENNICHGDVLEQKIDFNGFERLVDCAAPPLSVIREPLHYQRSKRKLFTRLYIWMKDGDSTETSLTFKRIIHGLERLKADIALHSEILCFQLYDLKRDGTLRTEEVVELSESLILLCCYEGDEKDEERLTVISEFLKSCFSGCQDRRSFQITMEDFQAIVDTTGLHATLEFFLKKLIDGLLGKLNAS.

The region spanning leucine 20–asparagine 85 is the GRAM domain. Positions glycine 216–glycine 404 constitute a Rab-GAP TBC domain.

Its subcellular location is the cytoplasm. The protein resides in the nucleus. Its function is as follows. Stimulates specifically the GTPase activity of ypt2 and ryh1. Inactivates ryh1 during recycling between the endosome and the Golgi compartments. The sequence is that of GTPase-activating protein gyp2 from Schizosaccharomyces pombe (strain 972 / ATCC 24843) (Fission yeast).